Consider the following 270-residue polypeptide: Phosphatidylglycerol--prolipoprotein diacylglyceryl transferase (270 aa).

4 consecutive transmembrane segments (helical) span residues 19–39 (FPVY…LWLA), 53–73 (FVDL…AYYV), 92–112 (QGGL…IIYA), and 117–137 (ISFW…QAIG). A 1,2-diacyl-sn-glycero-3-phospho-(1'-sn-glycerol) is bound at residue Arg138. Helical transmembrane passes span 178 to 198 (HPTF…LLLL), 206 to 226 (GELF…VEEL), and 236 to 256 (LRIA…FIIV).

The protein belongs to the Lgt family.

It is found in the cell membrane. The enzyme catalyses L-cysteinyl-[prolipoprotein] + a 1,2-diacyl-sn-glycero-3-phospho-(1'-sn-glycerol) = an S-1,2-diacyl-sn-glyceryl-L-cysteinyl-[prolipoprotein] + sn-glycerol 1-phosphate + H(+). It functions in the pathway protein modification; lipoprotein biosynthesis (diacylglyceryl transfer). Its function is as follows. Catalyzes the transfer of the diacylglyceryl group from phosphatidylglycerol to the sulfhydryl group of the N-terminal cysteine of a prolipoprotein, the first step in the formation of mature lipoproteins. In Bacillus cytotoxicus (strain DSM 22905 / CIP 110041 / 391-98 / NVH 391-98), this protein is Phosphatidylglycerol--prolipoprotein diacylglyceryl transferase.